The sequence spans 511 residues: Maturase K (511 aa).

It belongs to the intron maturase 2 family. MatK subfamily.

Its subcellular location is the plastid. It localises to the chloroplast. Functionally, usually encoded in the trnK tRNA gene intron. Probably assists in splicing its own and other chloroplast group II introns. This is Maturase K from Hordeum vulgare (Barley).